A 263-amino-acid polypeptide reads, in one-letter code: E3 ubiquitin-protein ligase SINA-like 8 (263 aa).

The RING-type; degenerate zinc finger occupies 35 to 71 (CPICCEGLTCPIFQCENGHLACSSCCPKLRNKCPACP). Residues 75-261 (ILESILVTCP…IKLSIVETSN (187 aa)) form an SBD region. Residues 78 to 136 (SILVTCPNDMFGCTESFLYGKKSTHEEECIFSLCSCPSLDCEYSGRYEDLYDHYKLTHI) form an SIAH-type zinc finger. Positions 83, 90, 102, 106, 113, 118, 130, and 135 each coordinate Zn(2+).

Belongs to the SINA (Seven in absentia) family.

The catalysed reaction is S-ubiquitinyl-[E2 ubiquitin-conjugating enzyme]-L-cysteine + [acceptor protein]-L-lysine = [E2 ubiquitin-conjugating enzyme]-L-cysteine + N(6)-ubiquitinyl-[acceptor protein]-L-lysine.. It participates in protein modification; protein ubiquitination. Functionally, E3 ubiquitin-protein ligase that mediates ubiquitination and subsequent proteasomal degradation of target proteins. E3 ubiquitin ligases accept ubiquitin from an E2 ubiquitin-conjugating enzyme in the form of a thioester and then directly transfers the ubiquitin to targeted substrates. It probably triggers the ubiquitin-mediated degradation of different substrates. This chain is E3 ubiquitin-protein ligase SINA-like 8, found in Arabidopsis thaliana (Mouse-ear cress).